Here is a 424-residue protein sequence, read N- to C-terminus: Elongation factor 1-alpha (424 aa).

The 219-residue stretch at 5-223 folds into the tr-type G domain; sequence KPHLNLITIG…DAFKVPEKPI (219 aa). The segment at 14–21 is G1; that stretch reads GHVDHGKS. GTP is bound at residue 14–21; it reads GHVDHGKS. Serine 21 is a Mg(2+) binding site. Positions 70–74 are G2; it reads GVTID. The tract at residues 91-94 is G3; that stretch reads DAPG. Residues 91 to 95 and 148 to 151 contribute to the GTP site; these read DAPGH and NKMD. The interval 148 to 151 is G4; sequence NKMD. Positions 187-189 are G5; it reads SGY.

It belongs to the TRAFAC class translation factor GTPase superfamily. Classic translation factor GTPase family. EF-Tu/EF-1A subfamily.

It localises to the cytoplasm. The enzyme catalyses GTP + H2O = GDP + phosphate + H(+). Functionally, GTP hydrolase that promotes the GTP-dependent binding of aminoacyl-tRNA to the A-site of ribosomes during protein biosynthesis. This is Elongation factor 1-alpha from Thermoplasma acidophilum (strain ATCC 25905 / DSM 1728 / JCM 9062 / NBRC 15155 / AMRC-C165).